A 280-amino-acid polypeptide reads, in one-letter code: MERTSNGGMLYHEVQESNLCAVHCVNTVLQGPFFSEFDLAAVAADLDGKERQVMLEGAAVGGFAPGDFLAEESHNVSLGGDFSIQVLQKALEVWDLQVIPLNCPDAEPAQIDPELESAFICHLHDHWFCIRKVNGEWYNFDSLLAAPQHLSKFYLSAFLDSLKGAGWSIFIVKGNFPQECPMSSSSEASNSFGQWLSPEDAERIRKNTSSGSSARNKRSNDNVNQQRRNQALSREEVQAFSEMEDDDLKAAIAASLLDASAAEANLGAVGTSEKETEKQK.

A Josephin domain is found at 7–187; the sequence is GGMLYHEVQE…QECPMSSSSE (181 aa). The active-site Nucleophile is the C20. Catalysis depends on H126, which acts as the Proton acceptor. D141 is an active-site residue. Composition is skewed to polar residues over residues 183 to 194 and 221 to 232; these read SSSSEASNSFGQ and DNVNQQRRNQAL. Residues 183–240 are disordered; sequence SSSSEASNSFGQWLSPEDAERIRKNTSSGSSARNKRSNDNVNQQRRNQALSREEVQAF. Positions 243–262 constitute a UIM domain; it reads MEDDDLKAAIAASLLDASAA.

Its subcellular location is the nucleus. The catalysed reaction is Thiol-dependent hydrolysis of ester, thioester, amide, peptide and isopeptide bonds formed by the C-terminal Gly of ubiquitin (a 76-residue protein attached to proteins as an intracellular targeting signal).. In terms of biological role, interacts with key regulators of transcription and represses transcription. Acts as a histone-binding protein that regulates transcription. Acts as a deubiquitinating enzyme. The protein is Ataxin-3 homolog of Arabidopsis thaliana (Mouse-ear cress).